The primary structure comprises 446 residues: MTEQKRKIEKLTGVKGMNDILPQDAGLWEFFEATVKSLLRAYGYQNIRTPIVEHTQLFTRGIGEVTDIVEKEMYSFTDALNGENLTMRPENTAAVVRASIEHNMLYDGPKRLWYIGPMFRHERPQRGRYRQFHQVGVEALGFAGPDADAEIIMMCQRLWDDLGLTGIKLEINSLGLAEERAAHRVELIKYLEQFADVLDEDAKRRLYTNPLRVLDTKNPALQDIAQNAPKLIDFLGDESRAHFEGLQRLLLANNIPFKINPRLVRGLDYYNLTVFEWVTDKLGAQGTVAAGGRYDPLIEQLGGKPTAACGWAMGIERILELLKEEDLAPEQEGVDVYVVHQGDTAREQAFIAAERLRDTGLDVIFHCSADGAPASFKSQMKRADASGAAFAVIFGEEEVANGTVGVKALRGAGAEGEKNVQQTVPVESLTEFLINAMVASAEDGDD.

This sequence belongs to the class-II aminoacyl-tRNA synthetase family. As to quaternary structure, homodimer.

It localises to the cytoplasm. It carries out the reaction tRNA(His) + L-histidine + ATP = L-histidyl-tRNA(His) + AMP + diphosphate + H(+). This Burkholderia cenocepacia (strain HI2424) protein is Histidine--tRNA ligase.